We begin with the raw amino-acid sequence, 105 residues long: MNKILKGDEVIVLTGRDKGKRGKIAVRVDEDHVLVDGVNVVKKHVRPNPLKGTTGGIVDKTMPIHQSNVAIYNPASGKADRVGIKLLADGKKVRVFKSSGEEIKA.

Belongs to the universal ribosomal protein uL24 family. Part of the 50S ribosomal subunit.

In terms of biological role, one of two assembly initiator proteins, it binds directly to the 5'-end of the 23S rRNA, where it nucleates assembly of the 50S subunit. Functionally, one of the proteins that surrounds the polypeptide exit tunnel on the outside of the subunit. This is Large ribosomal subunit protein uL24 from Leptothrix cholodnii (strain ATCC 51168 / LMG 8142 / SP-6) (Leptothrix discophora (strain SP-6)).